Here is a 91-residue protein sequence, read N- to C-terminus: Large ribosomal subunit protein bL27 (91 aa).

Residues 1-22 (MAHKKAGGSSRNGRDSDGRRLG) form a disordered region.

This sequence belongs to the bacterial ribosomal protein bL27 family.

This is Large ribosomal subunit protein bL27 from Beijerinckia indica subsp. indica (strain ATCC 9039 / DSM 1715 / NCIMB 8712).